A 196-amino-acid chain; its full sequence is ATP synthase subunit b (196 aa).

A helical membrane pass occupies residues 24-44; it reads PLSELLIGTLSFALLVAFFFW.

This sequence belongs to the ATPase B chain family. F-type ATPases have 2 components, F(1) - the catalytic core - and F(0) - the membrane proton channel. F(1) has five subunits: alpha(3), beta(3), gamma(1), delta(1), epsilon(1). F(0) has three main subunits: a(1), b(2) and c(10-14). The alpha and beta chains form an alternating ring which encloses part of the gamma chain. F(1) is attached to F(0) by a central stalk formed by the gamma and epsilon chains, while a peripheral stalk is formed by the delta and b chains.

The protein localises to the cell membrane. Functionally, f(1)F(0) ATP synthase produces ATP from ADP in the presence of a proton or sodium gradient. F-type ATPases consist of two structural domains, F(1) containing the extramembraneous catalytic core and F(0) containing the membrane proton channel, linked together by a central stalk and a peripheral stalk. During catalysis, ATP synthesis in the catalytic domain of F(1) is coupled via a rotary mechanism of the central stalk subunits to proton translocation. Its function is as follows. Component of the F(0) channel, it forms part of the peripheral stalk, linking F(1) to F(0). The polypeptide is ATP synthase subunit b (Frankia casuarinae (strain DSM 45818 / CECT 9043 / HFP020203 / CcI3)).